Here is a 364-residue protein sequence, read N- to C-terminus: UDP-N-acetylglucosamine--N-acetylmuramyl-(pentapeptide) pyrophosphoryl-undecaprenol N-acetylglucosamine transferase (364 aa).

Residues 16 to 18 (TGG), Asn128, Arg166, Ser195, Ile249, and Gln294 contribute to the UDP-N-acetyl-alpha-D-glucosamine site.

It belongs to the glycosyltransferase 28 family. MurG subfamily.

It is found in the cell inner membrane. The enzyme catalyses di-trans,octa-cis-undecaprenyl diphospho-N-acetyl-alpha-D-muramoyl-L-alanyl-D-glutamyl-meso-2,6-diaminopimeloyl-D-alanyl-D-alanine + UDP-N-acetyl-alpha-D-glucosamine = di-trans,octa-cis-undecaprenyl diphospho-[N-acetyl-alpha-D-glucosaminyl-(1-&gt;4)]-N-acetyl-alpha-D-muramoyl-L-alanyl-D-glutamyl-meso-2,6-diaminopimeloyl-D-alanyl-D-alanine + UDP + H(+). The protein operates within cell wall biogenesis; peptidoglycan biosynthesis. In terms of biological role, cell wall formation. Catalyzes the transfer of a GlcNAc subunit on undecaprenyl-pyrophosphoryl-MurNAc-pentapeptide (lipid intermediate I) to form undecaprenyl-pyrophosphoryl-MurNAc-(pentapeptide)GlcNAc (lipid intermediate II). This chain is UDP-N-acetylglucosamine--N-acetylmuramyl-(pentapeptide) pyrophosphoryl-undecaprenol N-acetylglucosamine transferase, found in Chromohalobacter salexigens (strain ATCC BAA-138 / DSM 3043 / CIP 106854 / NCIMB 13768 / 1H11).